The chain runs to 991 residues: Gingipain R1 (991 aa).

The N-terminal stretch at Met-1 to Gln-24 is a signal peptide. Positions Gln-25–Arg-227 are excised as a propeptide. Asp-305, Val-327, Asp-330, Tyr-332, Glu-334, Glu-388, and His-393 together coordinate Ca(2+). His-438 (proton donor) is an active-site residue. Cys-471 serves as the catalytic Nucleophile. 6 residues coordinate Ca(2+): Phe-476, Glu-485, Asp-519, Glu-520, Glu-523, and His-529.

Belongs to the peptidase C25 family.

Its subcellular location is the secreted. It carries out the reaction Hydrolysis of proteins and small molecule substrates, with a preference for Arg in P1.. Requires cysteine for activation and Ca(2+) and/or Mg(2+) for stabilization. It is stimulated by glycine-containing dipeptides. It is resistant to inhibition by proteinase inhibitors in human plasma. In terms of biological role, thiol protease. Acts synergistically with RgpB to catalyze the maturation of fimbrial subunits, such as FimA. Its proteolytic activity is a major factor in both periodontal tissue destruction and in evasion of host defense mechanisms. The polypeptide is Gingipain R1 (rgpA) (Porphyromonas gingivalis (Bacteroides gingivalis)).